A 275-amino-acid polypeptide reads, in one-letter code: Fructose permease IID component (275 aa).

In terms of domain architecture, PTS EIID spans 5–274 (KRLTKKEIFS…GILGYWAGFL (270 aa)). 5 consecutive transmembrane segments (helical) span residues 100-120 (MKIG…WGTI), 127-147 (LGAS…FFLL), 187-207 (ILGL…NIPI), 227-247 (VLDS…VAWM), and 255-275 (LLII…GFLA).

It localises to the cell membrane. The phosphoenolpyruvate-dependent sugar phosphotransferase system (PTS), a major carbohydrate active -transport system, catalyzes the phosphorylation of incoming sugar substrates concomitant with their translocation across the cell membrane. This system is involved in fructose transport. This Bacillus subtilis (strain 168) protein is Fructose permease IID component (levG).